Consider the following 895-residue polypeptide: AP-1 complex subunit gamma (895 aa).

5 HEAT repeats span residues Thr130–Val166, Pro167–Thr205, Lys211–Gln256, Asn301–Gln339, and Val341–Ile376. Disordered regions lie at residues Lys591 to Met687, Asn706 to Ser733, and Gln746 to Val770. Composition is skewed to low complexity over residues Pro604–Gln626, Gln639–Ala658, Asn675–Met687, Asn706–Asn731, and Gln746–Thr765. Residues Pro775–Ser893 form the GAE domain.

The protein belongs to the adaptor complexes large subunit family. In terms of assembly, adaptor protein complex 1 (AP-1) is a heterotetramer composed of two large adaptins (gamma-type subunit and beta-type subunit), a medium adaptin (mu-type subunit) and a small adaptin (sigma-type subunit). Interacts with rhgA.

The protein resides in the golgi apparatus. It is found in the trans-Golgi network. Its subcellular location is the cytoplasmic vesicle. It localises to the clathrin-coated vesicle membrane. Its function is as follows. Subunit of clathrin-associated adaptor protein complex 1 that plays a role in protein sorting in the trans-Golgi network (TGN) and endosomes. The AP complexes mediate the recruitment of clathrin to membranes and the recognition of sorting signals within the cytosolic tails of transmembrane cargo molecules. Also involved in early steps of phagocytosis and macropinocytosis. This Dictyostelium discoideum (Social amoeba) protein is AP-1 complex subunit gamma (ap1g1).